A 178-amino-acid chain; its full sequence is Interleukin-10 (178 aa).

The first 18 residues, 1–18 (MHSSALLCFLVFLAGVGA), serve as a signal peptide directing secretion. A glycan (N-linked (GlcNAc...) asparagine) is linked at asparagine 29. Intrachain disulfides connect cysteine 30–cysteine 126 and cysteine 80–cysteine 132. Residue asparagine 134 is glycosylated (N-linked (GlcNAc...) asparagine).

Belongs to the IL-10 family. As to quaternary structure, homodimer. Interacts with IL10RA and IL10RB.

It localises to the secreted. Its function is as follows. Major immune regulatory cytokine that acts on many cells of the immune system where it has profound anti-inflammatory functions, limiting excessive tissue disruption caused by inflammation. Mechanistically, IL10 binds to its heterotetrameric receptor comprising IL10RA and IL10RB leading to JAK1 and STAT2-mediated phosphorylation of STAT3. In turn, STAT3 translocates to the nucleus where it drives expression of anti-inflammatory mediators. Targets antigen-presenting cells (APCs) such as macrophages and monocytes and inhibits their release of pro-inflammatory cytokines including granulocyte-macrophage colony-stimulating factor /GM-CSF, granulocyte colony-stimulating factor/G-CSF, IL-1 alpha, IL-1 beta, IL-6, IL-8 and TNF-alpha. Also interferes with antigen presentation by reducing the expression of MHC-class II and co-stimulatory molecules, thereby inhibiting their ability to induce T cell activation. In addition, controls the inflammatory response of macrophages by reprogramming essential metabolic pathways including mTOR signaling. In Felis catus (Cat), this protein is Interleukin-10 (IL10).